The chain runs to 304 residues: N-acetylmuramic acid 6-phosphate etherase (304 aa).

Residues 58 to 221 form the SIS domain; the sequence is IAERIHRGGR…STGVMIKLGK (164 aa). The active-site Proton donor is glutamate 86. The active site involves glutamate 117.

This sequence belongs to the GCKR-like family. MurNAc-6-P etherase subfamily. Homodimer.

It carries out the reaction N-acetyl-D-muramate 6-phosphate + H2O = N-acetyl-D-glucosamine 6-phosphate + (R)-lactate. The protein operates within amino-sugar metabolism; N-acetylmuramate degradation. Its function is as follows. Specifically catalyzes the cleavage of the D-lactyl ether substituent of MurNAc 6-phosphate, producing GlcNAc 6-phosphate and D-lactate. The chain is N-acetylmuramic acid 6-phosphate etherase from Clostridium beijerinckii (strain ATCC 51743 / NCIMB 8052) (Clostridium acetobutylicum).